We begin with the raw amino-acid sequence, 286 residues long: 2,3,4,5-tetrahydropyridine-2,6-dicarboxylate N-succinyltransferase (286 aa).

It belongs to the transferase hexapeptide repeat family.

The protein localises to the cytoplasm. The catalysed reaction is (S)-2,3,4,5-tetrahydrodipicolinate + succinyl-CoA + H2O = (S)-2-succinylamino-6-oxoheptanedioate + CoA. It participates in amino-acid biosynthesis; L-lysine biosynthesis via DAP pathway; LL-2,6-diaminopimelate from (S)-tetrahydrodipicolinate (succinylase route): step 1/3. This chain is 2,3,4,5-tetrahydropyridine-2,6-dicarboxylate N-succinyltransferase, found in Rhizobium leguminosarum bv. trifolii (strain WSM2304).